A 169-amino-acid chain; its full sequence is Interleukin-36 gamma (169 aa).

Residues 1–17 (MRGTPGDADGGGRAVYQ) constitute a propeptide that is removed on maturation.

The protein belongs to the IL-1 family. In terms of assembly, interacts with cargo receptor TMED10; the interaction mediates the translocation from the cytoplasm into the ERGIC (endoplasmic reticulum-Golgi intermediate compartment) and thereby secretion. Post-translationally, N-terminal truncation leads to a dramatic enhancement of its activity (&gt;1000-fold). Proteolytically cleaved by cathepsin CTSG. As to expression, highly expressed in tissues containing epithelial cells: skin, lung, stomach and esophagus. Expressed in bronchial epithelial. In skin is expressed only in keratinocytes but not in fibroblasts, endothelial cells or melanocytes. Up-regulated in lesional psoriasis skin. Expressed in monocyte-derived dendritic cells and M1 macrophages.

The protein resides in the cytoplasm. Its subcellular location is the secreted. Functionally, cytokine that binds to and signals through the IL1RL2/IL-36R receptor which in turn activates NF-kappa-B and MAPK signaling pathways in target cells. Part of the IL-36 signaling system that is thought to be present in epithelial barriers and to take part in local inflammatory response; similar to the IL-1 system with which it shares the coreceptor IL1RAP. Seems to be involved in skin inflammatory response by acting on keratinocytes, dendritic cells and indirectly on T-cells to drive tissue infiltration, cell maturation and cell proliferation. In cultured keratinocytes induces the expression of macrophage, T-cell, and neutrophil chemokines, such as CCL3, CCL4, CCL5, CCL2, CCL17, CCL22, CL20, CCL5, CCL2, CCL17, CCL22, CXCL8, CCL20 and CXCL1; also stimulates its own expression and that of the prototypic cutaneous pro-inflammatory parameters TNF-alpha, S100A7/psoriasin and inducible NOS. May play a role in pro-inflammatory responses during particular neutrophilic airway inflammation: activates mitogen-activated protein kinases and NF-kappa B in primary lung fibroblasts, and stimulates the expression of IL-8 and CXCL3 and Th17 chemokine CCL20 in lung fibroblasts. May be involved in the innate immune response to fungal pathogens, such as Aspergillus fumigatus. In Homo sapiens (Human), this protein is Interleukin-36 gamma.